The sequence spans 335 residues: Dihydroorotate dehydrogenase (quinone) (335 aa).

Residues 59 to 63 and Thr83 each bind FMN; that span reads AGLDK. Lys63 is a binding site for substrate. 108–112 is a substrate binding site; sequence NRMGF. FMN is bound by residues Asn136 and Asn169. Asn169 is a substrate binding site. Ser172 acts as the Nucleophile in catalysis. Substrate is bound at residue Asn174. FMN is bound by residues Lys214 and Thr242. 243–244 serves as a coordination point for substrate; sequence NT. Residues Gly265, Gly294, and 315–316 each bind FMN; that span reads YS.

This sequence belongs to the dihydroorotate dehydrogenase family. Type 2 subfamily. Monomer. It depends on FMN as a cofactor.

It localises to the cell membrane. It catalyses the reaction (S)-dihydroorotate + a quinone = orotate + a quinol. Its pathway is pyrimidine metabolism; UMP biosynthesis via de novo pathway; orotate from (S)-dihydroorotate (quinone route): step 1/1. In terms of biological role, catalyzes the conversion of dihydroorotate to orotate with quinone as electron acceptor. The polypeptide is Dihydroorotate dehydrogenase (quinone) (Neisseria meningitidis serogroup A / serotype 4A (strain DSM 15465 / Z2491)).